We begin with the raw amino-acid sequence, 617 residues long: Electron transfer flavoprotein-ubiquinone oxidoreductase, mitochondrial (617 aa).

A mitochondrion-targeting transit peptide spans 1–33 (MQVLLARLACPVYQCFHAIKIKKNYLPLCATRW). 71-85 (VVIVGAGPAGLSAAA) contributes to the FAD binding site. An N6-acetyllysine modification is found at K96. The stretch at 109 to 130 (IGAHTLSGACLDPRALQELFPD) is an intramembrane region. N6-acetyllysine is present on residues K132 and K223. A ubiquinone is bound by residues G305 and G306. N6-acetyllysine is present on K357. An intramembrane segment occupies 428 to 447 (IGLDVTEYEDNLKKSWVWKE). At S551 the chain carries Phosphoserine. [4Fe-4S] cluster is bound by residues C561, C586, C589, and C592. The 30-residue stretch at 577-606 (FRLQINAQNCVHCKTCDIKDPSQNINWVVP) folds into the 4Fe-4S ferredoxin-type domain.

It belongs to the ETF-QO/FixC family. In terms of assembly, monomer. Requires [4Fe-4S] cluster as cofactor. It depends on FAD as a cofactor.

The protein localises to the mitochondrion inner membrane. The catalysed reaction is a ubiquinone + reduced [electron-transfer flavoprotein] = a ubiquinol + oxidized [electron-transfer flavoprotein] + H(+). Accepts electrons from ETF and reduces ubiquinone. The chain is Electron transfer flavoprotein-ubiquinone oxidoreductase, mitochondrial (ETFDH) from Bos taurus (Bovine).